Consider the following 299-residue polypeptide: MAVVIDGKAKAASVTEAVRKSAEALEAEKGVKPGLAVVIVGNDPASHAYVNSKSKMAKQCGFNSIQHTLPEETTQAALLKLVGELNTDASIHGILVQLPLPKHFNSDEIIQSILPEKDVDGLSVLNAGKLATGDLATGLISCTPAGAMLLVRGIHGDDLSGLNAVVIGRSNLFGKPMGQLLLNANATVTMAHSRTKDLVTVCKTADILVAAVGRAAMVKGDWVKPGATVIDVGINRIAAPEKGEGKSKLVGDVAFDEASAVAAAITPVPGGVGPMTIAMLMANTVIAAHRALGKTAPKF.

Residues 168–170, Ser193, and Ile234 each bind NADP(+); that span reads GRS.

Belongs to the tetrahydrofolate dehydrogenase/cyclohydrolase family. Homodimer.

The catalysed reaction is (6R)-5,10-methylene-5,6,7,8-tetrahydrofolate + NADP(+) = (6R)-5,10-methenyltetrahydrofolate + NADPH. It carries out the reaction (6R)-5,10-methenyltetrahydrofolate + H2O = (6R)-10-formyltetrahydrofolate + H(+). Its pathway is one-carbon metabolism; tetrahydrofolate interconversion. Catalyzes the oxidation of 5,10-methylenetetrahydrofolate to 5,10-methenyltetrahydrofolate and then the hydrolysis of 5,10-methenyltetrahydrofolate to 10-formyltetrahydrofolate. This Agrobacterium fabrum (strain C58 / ATCC 33970) (Agrobacterium tumefaciens (strain C58)) protein is Bifunctional protein FolD.